The sequence spans 337 residues: Cytoskeleton protein RodZ (337 aa).

Topologically, residues 1–111 are cytoplasmic; sequence MNTEATHDQN…LGKRRKKRDG (111 aa). One can recognise an HTH cro/C1-type domain in the interval 19 to 71; it reads LRNAREQLGLSQQAVAERLCLKVSTVRDIEEDKAPADLASTFLRGYIRSYARL. Positions 30 to 49 form a DNA-binding region, H-T-H motif; it reads QQAVAERLCLKVSTVRDIEE. The helical; Signal-anchor for type II membrane protein transmembrane segment at 112-132 threads the bilayer; sequence WLMTFTWLVLFVVIGLSGAWW. The Periplasmic segment spans residues 133-337; the sequence is WQDHKAQQEE…TLNAEQSPAQ (205 aa). Over residues 145-167 the composition is skewed to polar residues; that stretch reads TMADQSSAELSSNSEQGQSVPLN. The tract at residues 145 to 220 is disordered; that stretch reads TMADQSSAEL…VSPSQANVDT (76 aa). Low complexity predominate over residues 168-207; that stretch reads TSTTTDPATTSTPPASVDTTATNTQTPAVTAPAPAVDPQQ. Polar residues predominate over residues 208–218; the sequence is NAVVSPSQANV.

The protein belongs to the RodZ family.

Its subcellular location is the cell inner membrane. In terms of biological role, cytoskeletal protein that is involved in cell-shape control through regulation of the length of the long axis. The polypeptide is Cytoskeleton protein RodZ (Escherichia coli O17:K52:H18 (strain UMN026 / ExPEC)).